The chain runs to 494 residues: Probable cytochrome P450 515A1 (494 aa).

The helical transmembrane segment at 1 to 21 threads the bilayer; sequence MILGIILGLFIYIYLINIKFF. Residue Cys-440 participates in heme binding.

The protein belongs to the cytochrome P450 family. The cofactor is heme.

The protein localises to the membrane. In Dictyostelium discoideum (Social amoeba), this protein is Probable cytochrome P450 515A1 (cyp515A1).